A 157-amino-acid chain; its full sequence is 6,7-dimethyl-8-ribityllumazine synthase (157 aa).

5-amino-6-(D-ribitylamino)uracil contacts are provided by residues phenylalanine 25, 59-61, and 83-85; these read AME and AII. Residue 88-89 participates in (2S)-2-hydroxy-3-oxobutyl phosphate binding; the sequence is ST. The active-site Proton donor is the histidine 91. Phenylalanine 116 provides a ligand contact to 5-amino-6-(D-ribitylamino)uracil. Arginine 130 is a binding site for (2S)-2-hydroxy-3-oxobutyl phosphate.

This sequence belongs to the DMRL synthase family.

The enzyme catalyses (2S)-2-hydroxy-3-oxobutyl phosphate + 5-amino-6-(D-ribitylamino)uracil = 6,7-dimethyl-8-(1-D-ribityl)lumazine + phosphate + 2 H2O + H(+). It participates in cofactor biosynthesis; riboflavin biosynthesis; riboflavin from 2-hydroxy-3-oxobutyl phosphate and 5-amino-6-(D-ribitylamino)uracil: step 1/2. Its function is as follows. Catalyzes the formation of 6,7-dimethyl-8-ribityllumazine by condensation of 5-amino-6-(D-ribitylamino)uracil with 3,4-dihydroxy-2-butanone 4-phosphate. This is the penultimate step in the biosynthesis of riboflavin. This Lawsonia intracellularis (strain PHE/MN1-00) protein is 6,7-dimethyl-8-ribityllumazine synthase.